We begin with the raw amino-acid sequence, 89 residues long: HssA/B-like protein 14 (89 aa).

This sequence belongs to the hssA/B family.

This is HssA/B-like protein 14 (hssl14) from Dictyostelium discoideum (Social amoeba).